Consider the following 283-residue polypeptide: Protoheme IX farnesyltransferase (283 aa).

9 helical membrane passes run 6–26 (LLLT…AGFL), 35–55 (FGLF…GCVF), 85–105 (AIVF…FYTN), 106–126 (LLTL…YSIW), 131–151 (VYGT…GYCA), 160–180 (AFIL…SIAI), 207–227 (ILLY…FHFT), 230–250 (LYLI…LRGL), and 262–282 (MFRF…FDLV).

It belongs to the UbiA prenyltransferase family. Protoheme IX farnesyltransferase subfamily.

The protein localises to the cell inner membrane. It catalyses the reaction heme b + (2E,6E)-farnesyl diphosphate + H2O = Fe(II)-heme o + diphosphate. It participates in porphyrin-containing compound metabolism; heme O biosynthesis; heme O from protoheme: step 1/1. Functionally, converts heme B (protoheme IX) to heme O by substitution of the vinyl group on carbon 2 of heme B porphyrin ring with a hydroxyethyl farnesyl side group. This is Protoheme IX farnesyltransferase from Protochlamydia amoebophila (strain UWE25).